A 2549-amino-acid chain; its full sequence is Serine/threonine-protein kinase mTOR (2549 aa).

Methionine 1 carries the post-translational modification N-acetylmethionine. The interval 1 to 651 is interaction with NBN; sequence MLGTGPAAAT…HVVSQTAVQV (651 aa). 32 HEAT repeats span residues 16–53, 55–99, 100–137, 138–179, 180–220, 222–276, 277–313, 314–364, 365–409, 410–445, 446–494, 495–529, 530–563, 564–596, 597–636, 637–683, 686–724, 727–766, 769–811, 814–853, 857–893, 894–942, 943–988, 989–1027, 1029–1068, 1069–1105, 1106–1144, 1145–1188, 1189–1225, 1226–1273, 1274–1311, and 1312–1345; these read SSNVSVLQQFASGLKSRNEETRAKAAKELQHYVTMELR, MSQE…VEGG, NATRIGRFANYLRNLLPSNDPVVMEMASKAIGRLAMAG, DTFT…AISV, PTFF…LILT, QREP…RISS, MEGERLREEMEEITQQQLVHDKYCKDLMGFGTKPRHI, TPFT…CCRD, LMEE…AFTD, TQYLQDTMNHVLSCVKKEKERTAAFQALGLLSVAVR, SEFK…RAMG, PGIQQDIKELLEPMLAVGLSPALTAVLYDLSRQIP, QLKKDIQDGLLKMLSLVLMHKPLRHPGMPKGLAH, QLASPGLTTLPEASDVGSITLALRTLGSFEFEG, HSLTQFVRHCADHFLNSEHKEIRMEAARTCSRLLTPSIHL, ISGH…DERF, HLAQAENLQALFVALNDQVFEIRELAICTVGRLSSMNPA, MPFLRKMLIQILTELEHSGIGRIKEQSARMLGHLVSNAPR, RPYM…VSGL, RKWVDELFIIIMDMLQDSSLLAKRQVALWTLGQLVASTGY, PYRKYPTLLEVLLNFLKTEQNQGTRREAIRVLGLLGA, LDPY…GNLP, LDEF…KCVQ, FLPQVMPTFLNVIRVCDGAIREFLFQQLGMLVSFVKSHI, PYMDEIVTLMREFWVMNTSIQSTIILLIEQIVVALGGEFK, LYLPQLIPHMLRVFMHDNSPGRIVSIKLLAAIQLFGA, NLDDYLHLLLPPIVKLFDAPEAPLPSRKAALETVDRLTE, SLDF…GKKY, QIFIPMVNKVLVRHRINHQRYDVLICRIVKGYTLADE, EEDP…GAAR, RVSKDDWLEWLRRLSLELLKDSSSPSLRSCWALAQAYN, and PMARDLFNAAFVSCWSELNEDQQDELIRSIELAL. Serine 567 carries the phosphoserine modification. Threonine 1162 carries the phosphothreonine modification. Lysine 1218 carries the post-translational modification N6-acetyllysine. Serine 1261 carries the post-translational modification Phosphoserine. TPR repeat units lie at residues 1346–1382, 1383–1408, 1409–1442, 1443–1473, 1474–1507, 1508–1541, 1542–1574, 1575–1614, 1615–1649, 1650–1693, 1694–1731, 1732–1786, 1787–1846, 1898–1930, 1931–1970, and 1971–2005; these read TSQDIAEVTQTLLNLAEFMEHSDKGPLPLRDDNGIVL, LGERAAKCRAYAKALHYKELEFQKGP, TPAILESLISINNKLQQPEAAAGVLEYAMKHFGE, LEIQATWYEKLHEWEDALVAYDKKMDTNKDD, PELMLGRMRCLEALGEWGQLHQQCCEKWTLVNDE, TQAKMARMAAAAAWGLGQWDSMEEYTCMIPRDTH, DGAFYRAVLALHQDLFSLAQQCIDKARDLLDAE, LTAMAGESYSRAYGAMVSCHMLSELEEVIQYKLVPERREI, IRQIWWERLQGCQRIVEDWQKILMVRSLVVSPHED, MRTW…PTVH, PQVTYAYMKNMWKSARKIDAFQHMQHFVQTMQQQAQHA, IATE…DRSW, YKAW…STEG, NNLQDTLRVLTLWFDYGHWPDVNEALVEGVKAI, QIDTWLQVIPQLIARIDTPRPLVGRLIHQLLTDIGRYHPQ, and ALIYPLTVASKSTTTARHNAANKILKNMCEHSNTL. The FAT domain occupies 1382–1982; it reads LLGERAAKCR…IYPLTVASKS (601 aa). 1D-myo-inositol hexakisphosphate contacts are provided by lysine 1662, lysine 1702, and arginine 1749. A disordered region spans residues 1812-1867; sequence DEKKKLRHASGANITNATTAATTAATATTTASTEGSNSESEAESTENSPTPSPLQK. Residues 1820-1860 are compositionally biased toward low complexity; sequence ASGANITNATTAATTAATATTTASTEGSNSESEAESTENSP. Positions 2012–2144 are sufficient for interaction with the FKBP1A/rapamycin complex; that stretch reads VSEELIRVAI…DLELAVPGTY (133 aa). Lysine 2066 participates in a covalent cross-link: Glycyl lysine isopeptide (Lys-Gly) (interchain with G-Cter in ubiquitin). In terms of domain architecture, PI3K/PI4K catalytic spans 2156 to 2469; that stretch reads IAPSLQVITS…GVELGEPAHK (314 aa). Serine 2159 carries the post-translational modification Phosphoserine; by TBK1. The tract at residues 2162 to 2168 is G-loop; that stretch reads VITSKQR. Threonine 2164 carries the post-translational modification Phosphothreonine. Serine 2165 and glutamine 2167 together coordinate ATP. Phosphothreonine; by PKB/AKT1 is present on threonine 2173. Residues leucine 2185, lysine 2187, glutamate 2190, tyrosine 2225, glycine 2238, tryptophan 2239, valine 2240, and threonine 2245 each coordinate ATP. Positions 2258-2296 are interaction with MLST8; the sequence is KILLNIEHRIMLRMAPDYDHLTLMQKVEVFEHAVNNTAG. The segment at 2335 to 2343 is catalytic loop; it reads GLGDRHPSN. Residue asparagine 2343 participates in Mg(2+) binding. ATP-binding residues include methionine 2345 and isoleucine 2356. The activation loop stretch occupies residues 2355 to 2380; sequence HIDFGDCFEVAMTREKFPEKIPFRLT. Aspartate 2357 is a Mg(2+) binding site. Threonine 2446 is subject to Phosphothreonine; by RPS6KB1. Serine 2448 is modified (phosphoserine; by RPS6KB1). Serine 2478 is subject to Phosphoserine. Serine 2481 carries the phosphoserine; by autocatalysis modification. Residues 2517-2549 enclose the FATC domain; sequence DTLDVPTQVELLIKQATSHENLCQCYIGWCPFW.

Belongs to the PI3/PI4-kinase family. In terms of assembly, part of the mechanistic target of rapamycin complex 1 (mTORC1) which contains MTOR, MLST8 and RPTOR. The mTORC1 complex is a 1 Md obligate dimer of two stoichiometric heterotetramers with overall dimensions of 290 A x 210 A x 135 A. It has a rhomboid shape and a central cavity, the dimeric interfaces are formed by interlocking interactions between the two MTOR and the two RPTOR subunits. The MLST8 subunit forms distal foot-like protuberances, and contacts only one MTOR within the complex, while the small AKT1S1/PRAS40 localizes to the midsection of the central core, in close proximity to RPTOR. mTORC1 associates with AKT1S1/PRAS40, which inhibits its activity by blocking MTOR substrate-recruitment site. Component of the mechanistic target of rapamycin complex 2 (mTORC2), consisting in two heterotretramers composed of MTOR, MLST8, RICTOR and MAPKAP1/SIN1. Interacts with PLPP7 and PML. Interacts with PRR5 and RICTOR; the interaction is direct within the mTORC2 complex and interaction with RICTOR is enhanced by deubiquitination of RICTOR by USP9X. mTORC1 and mTORC2 associate with DEPTOR, which regulates their activity. Interacts with WAC; WAC positively regulates MTOR activity by promoting the assembly of the TTT complex composed of TELO2, TTI1 and TTI2 and the RUVBL complex composed of RUVBL1 and RUVBL2 into the TTT-RUVBL complex which leads to the dimerization of the mTORC1 complex and its subsequent activation. Interacts with UBQLN1. Interacts with TTI1 and TELO2. Interacts with CLIP1; phosphorylates and regulates CLIP1. Interacts with NBN. Interacts with HTR6. Interacts with BRAT1. Interacts with MEAK7 (via C-terminal domain); the interaction increases upon nutrient stimulation. Interacts with TM4SF5; the interaction is positively regulated by arginine and is negatively regulated by leucine. Interacts with GPR137B. Interacts with NCKAP1L. Interacts with TPCN1 and TPCN2; the interaction is required for TPCN1 and TPCN2 sensitivity to ATP. Interacts with ATP6V1A and with CRYAB, forming a ternary complex. Interacts with SLC38A7; this interaction mediates the recruitment of mTORC1 to the lysosome and its subsequent activation. Interacts with TSPAN8. In terms of processing, autophosphorylates when part of mTORC1 or mTORC2. Phosphorylation at Ser-1261, Ser-2159 and Thr-2164 promotes autophosphorylation. Phosphorylated at Ser-2448 by RPS6KB1. Phosphorylation in the kinase domain modulates the interactions of MTOR with RPTOR and AKT1S1/PRAS40 and leads to increased intrinsic mTORC1 kinase activity. Phosphorylation at Ser-2159 by TBK1 in response to growth factors and pathogen recognition receptors promotes mTORC1 activity. Phosphorylation at Ser-2159 by TBK1 in response to EGF growth factor promotes mTORC2 activity, leading to AKT1 phosphorylation and activation. Phosphorylation at Thr-2173 in the ATP-binding region by AKT1 strongly reduces kinase activity. Post-translationally, ubiquitinated at Lys-2066 by the SCF(FBXO22) complex via 'Lys-27'-linked ubiquitination prevents mTORC1 substrate recruitment. As to expression, expressed in numerous tissues, with highest levels in testis.

It is found in the lysosome membrane. Its subcellular location is the endoplasmic reticulum membrane. It localises to the golgi apparatus membrane. The protein localises to the cell membrane. The protein resides in the mitochondrion outer membrane. It is found in the cytoplasm. Its subcellular location is the nucleus. It localises to the PML body. The protein localises to the microsome membrane. The protein resides in the cytoplasmic vesicle. It is found in the phagosome. The enzyme catalyses L-seryl-[protein] + ATP = O-phospho-L-seryl-[protein] + ADP + H(+). The catalysed reaction is L-threonyl-[protein] + ATP = O-phospho-L-threonyl-[protein] + ADP + H(+). It carries out the reaction L-tyrosyl-[protein] + ATP = O-phospho-L-tyrosyl-[protein] + ADP + H(+). With respect to regulation, the mTORC1 complex is activated in response to nutrients, growth factors or amino acids: activation requires relocalization of the mTORC1 complex to lysosomes that is mediated by the Ragulator complex, SLC38A9, and the Rag GTPases RagA/RRAGA, RagB/RRAGB, RagC/RRAGC and RagD/RRAGD. Activation of mTORC1 by growth factors such as insulin involves AKT1-mediated phosphorylation of TSC1-TSC2, which leads to the activation of the RHEB GTPase a potent activator of the protein kinase activity of mTORC1. Insulin-stimulated and amino acid-dependent phosphorylation at Ser-1261 promotes autophosphorylation and the activation of mTORC1. On the other hand, low cellular energy levels can inhibit mTORC1 through activation of PRKAA1 while hypoxia inhibits mTORC1 through a REDD1-dependent mechanism which may also require PRKAA1. The kinase activity of MTOR within the mTORC1 complex is positively regulated by MLST8. The kinase activity of MTOR is inhibited by DEPTOR and AKT1S1. The non-canonical mTORC1 complex is independent of the RHEB GTPase and specifically mediates phosphorylation of MiT/TFE factors TFEB and TFE3 but not other mTORC1 substrates: it is activated by FLCN, which activates Rag GTPases RagC/RRAGC and RagD/RRAGD. MTOR is the target of the immunosuppressive and anti-cancer drug rapamycin which acts in complex with FKBP1A/FKBP12, and specifically inhibits its kinase activity. mTORC2 is also activated by growth factors, but seems to be nutrient-insensitive. mTORC2 associates and is directly activated by ribosomes. mTORC2 may also be regulated by RHEB but in an indirect manner through the PI3K signaling pathway. Functionally, serine/threonine protein kinase which is a central regulator of cellular metabolism, growth and survival in response to hormones, growth factors, nutrients, energy and stress signals. MTOR directly or indirectly regulates the phosphorylation of at least 800 proteins. Functions as part of 2 structurally and functionally distinct signaling complexes mTORC1 and mTORC2 (mTOR complex 1 and 2). In response to nutrients, growth factors or amino acids, mTORC1 is recruited to the lysosome membrane and promotes protein, lipid and nucleotide synthesis by phosphorylating key regulators of mRNA translation and ribosome synthesis. This includes phosphorylation of EIF4EBP1 and release of its inhibition toward the elongation initiation factor 4E (eiF4E). Moreover, phosphorylates and activates RPS6KB1 and RPS6KB2 that promote protein synthesis by modulating the activity of their downstream targets including ribosomal protein S6, eukaryotic translation initiation factor EIF4B, and the inhibitor of translation initiation PDCD4. Stimulates the pyrimidine biosynthesis pathway, both by acute regulation through RPS6KB1-mediated phosphorylation of the biosynthetic enzyme CAD, and delayed regulation, through transcriptional enhancement of the pentose phosphate pathway which produces 5-phosphoribosyl-1-pyrophosphate (PRPP), an allosteric activator of CAD at a later step in synthesis, this function is dependent on the mTORC1 complex. Regulates ribosome synthesis by activating RNA polymerase III-dependent transcription through phosphorylation and inhibition of MAF1 an RNA polymerase III-repressor. Activates dormant ribosomes by mediating phosphorylation of SERBP1, leading to SERBP1 inactivation and reactivation of translation. In parallel to protein synthesis, also regulates lipid synthesis through SREBF1/SREBP1 and LPIN1. To maintain energy homeostasis mTORC1 may also regulate mitochondrial biogenesis through regulation of PPARGC1A. In the same time, mTORC1 inhibits catabolic pathways: negatively regulates autophagy through phosphorylation of ULK1. Under nutrient sufficiency, phosphorylates ULK1 at 'Ser-758', disrupting the interaction with AMPK and preventing activation of ULK1. Also prevents autophagy through phosphorylation of the autophagy inhibitor DAP. Also prevents autophagy by phosphorylating RUBCNL/Pacer under nutrient-rich conditions. Prevents autophagy by mediating phosphorylation of AMBRA1, thereby inhibiting AMBRA1 ability to mediate ubiquitination of ULK1 and interaction between AMBRA1 and PPP2CA. mTORC1 exerts a feedback control on upstream growth factor signaling that includes phosphorylation and activation of GRB10 a INSR-dependent signaling suppressor. Among other potential targets mTORC1 may phosphorylate CLIP1 and regulate microtubules. The mTORC1 complex is inhibited in response to starvation and amino acid depletion. The non-canonical mTORC1 complex, which acts independently of RHEB, specifically mediates phosphorylation of MiT/TFE factors MITF, TFEB and TFE3 in the presence of nutrients, promoting their cytosolic retention and inactivation. Upon starvation or lysosomal stress, inhibition of mTORC1 induces dephosphorylation and nuclear translocation of TFEB and TFE3, promoting their transcription factor activity. The mTORC1 complex regulates pyroptosis in macrophages by promoting GSDMD oligomerization. MTOR phosphorylates RPTOR which in turn inhibits mTORC1. As part of the mTORC2 complex, MTOR transduces signals from growth factors to pathways involved in proliferation, cytoskeletal organization, lipogenesis and anabolic output. In response to growth factors, mTORC2 phosphorylates and activates AGC protein kinase family members, including AKT (AKT1, AKT2 and AKT3), PKC (PRKCA, PRKCB and PRKCE) and SGK1. In contrast to mTORC1, mTORC2 is nutrient-insensitive. mTORC2 plays a critical role in AKT1 activation by mediating phosphorylation of different sites depending on the context, such as 'Thr-450', 'Ser-473', 'Ser-477' or 'Thr-479', facilitating the phosphorylation of the activation loop of AKT1 on 'Thr-308' by PDPK1/PDK1 which is a prerequisite for full activation. mTORC2 also regulates the phosphorylation of SGK1 at 'Ser-422'. mTORC2 may regulate the actin cytoskeleton, through phosphorylation of PRKCA, PXN and activation of the Rho-type guanine nucleotide exchange factors RHOA and RAC1A or RAC1B. The mTORC2 complex also phosphorylates various proteins involved in insulin signaling, such as FBXW8 and IGF2BP1. May also regulate insulin signaling by acting as a tyrosine protein kinase that catalyzes phosphorylation of IGF1R and INSR; additional evidence are however required to confirm this result in vivo. Regulates osteoclastogenesis by adjusting the expression of CEBPB isoforms. Plays an important regulatory role in the circadian clock function; regulates period length and rhythm amplitude of the suprachiasmatic nucleus (SCN) and liver clocks. In Homo sapiens (Human), this protein is Serine/threonine-protein kinase mTOR.